Consider the following 507-residue polypeptide: Histidine ammonia-lyase (507 aa).

A cross-link (5-imidazolinone (Ala-Gly)) is located at residues 141–143 (ASG). Ser142 bears the 2,3-didehydroalanine (Ser) mark.

The protein belongs to the PAL/histidase family. Post-translationally, contains an active site 4-methylidene-imidazol-5-one (MIO), which is formed autocatalytically by cyclization and dehydration of residues Ala-Ser-Gly.

The protein localises to the cytoplasm. It catalyses the reaction L-histidine = trans-urocanate + NH4(+). Its pathway is amino-acid degradation; L-histidine degradation into L-glutamate; N-formimidoyl-L-glutamate from L-histidine: step 1/3. This Burkholderia cenocepacia (strain HI2424) protein is Histidine ammonia-lyase.